Consider the following 147-residue polypeptide: Molybdopterin synthase catalytic subunit 1 (147 aa).

Substrate is bound by residues 43–45 (NVR), 109–110 (HR), Lys-125, and 132–134 (KKE).

The protein belongs to the MoaE family. In terms of assembly, heterotetramer of 2 MoaD subunits and 2 MoaE subunits. Also stable as homodimer. The enzyme changes between these two forms during catalysis.

The catalysed reaction is 2 [molybdopterin-synthase sulfur-carrier protein]-C-terminal-Gly-aminoethanethioate + cyclic pyranopterin phosphate + H2O = molybdopterin + 2 [molybdopterin-synthase sulfur-carrier protein]-C-terminal Gly-Gly + 2 H(+). Its pathway is cofactor biosynthesis; molybdopterin biosynthesis. Its function is as follows. Converts molybdopterin precursor Z into molybdopterin. This requires the incorporation of two sulfur atoms into precursor Z to generate a dithiolene group. The sulfur is provided by MoaD. The polypeptide is Molybdopterin synthase catalytic subunit 1 (moaE1) (Mycobacterium tuberculosis (strain ATCC 25618 / H37Rv)).